A 298-amino-acid polypeptide reads, in one-letter code: Inosose dehydratase (298 aa).

Belongs to the IolE/MocC family. Glutathione serves as cofactor. It depends on Co(2+) as a cofactor. The cofactor is Mn(2+).

The catalysed reaction is scyllo-inosose = 3D-3,5/4-trihydroxycyclohexane-1,2-dione + H2O. The protein operates within polyol metabolism; myo-inositol degradation into acetyl-CoA; acetyl-CoA from myo-inositol: step 2/7. Functionally, catalyzes the dehydration of inosose (2-keto-myo-inositol, 2KMI or 2,4,6/3,5-pentahydroxycyclohexanone) to 3D-(3,5/4)-trihydroxycyclohexane-1,2-dione (D-2,3-diketo-4-deoxy-epi-inositol). The sequence is that of Inosose dehydratase from Bacillus anthracis (strain CDC 684 / NRRL 3495).